Here is a 196-residue protein sequence, read N- to C-terminus: Interferon lambda-3 (196 aa).

The signal sequence occupies residues 1–21 (MTGDCMPVLVLMAAVLTVTGA). Intrachain disulfides connect C37–C136, C71–C169, and C188–C195.

It belongs to the lambda interferon family.

It localises to the secreted. Cytokine with antiviral, antitumour and immunomodulatory activities. Plays a critical role in the antiviral host defense, predominantly in the epithelial tissues. Acts as a ligand for the heterodimeric class II cytokine receptor composed of IL10RB and IFNLR1, and receptor engagement leads to the activation of the JAK/STAT signaling pathway resulting in the expression of IFN-stimulated genes (ISG), which mediate the antiviral state. Has a restricted receptor distribution and therefore restricted targets: is primarily active in epithelial cells and this cell type-selective action is because of the epithelial cell-specific expression of its receptor IFNLR1. Seems not to be essential for early virus-activated host defense in vaginal infection, but plays an important role in Toll-like receptor (TLR)-induced antiviral defense. Plays a significant role in the antiviral immune defense in the intestinal epithelium. Exerts an immunomodulatory effect by up-regulating MHC class I antigen expression. This chain is Interferon lambda-3 (IFNL3), found in Homo sapiens (Human).